A 183-amino-acid polypeptide reads, in one-letter code: Large ribosomal subunit protein bL17 (183 aa).

Residues 130-150 (GTKFAKDEKAKAEATEAKAEE) show a composition bias toward basic and acidic residues. A disordered region spans residues 130 to 183 (GTKFAKDEKAKAEATEAKAEETTETTESTEAESTEAPAEEAKAEDTAAEKKDES). Residues 151–162 (TTETTESTEAES) show a composition bias toward acidic residues. Basic and acidic residues predominate over residues 168–183 (EEAKAEDTAAEKKDES).

It belongs to the bacterial ribosomal protein bL17 family. Part of the 50S ribosomal subunit. Contacts protein L32.

In Saccharopolyspora erythraea (strain ATCC 11635 / DSM 40517 / JCM 4748 / NBRC 13426 / NCIMB 8594 / NRRL 2338), this protein is Large ribosomal subunit protein bL17.